The chain runs to 140 residues: MRFMAGPAGSQNPGPMCFHSSLQALYTVLLIVLVMMSLVFGKFVPVNWERPQPLPVPKYLRCYRCLLETKELGCLLGSDTCLTPAGSSCITLHIKNGSNSDVMVSDCRSKEQMSDCSHTQTSPVSGFWMFSQCCFLGFLQ.

Residues 1-41 (MRFMAGPAGSQNPGPMCFHSSLQALYTVLLIVLVMMSLVFG) form the signal peptide. A UPAR/Ly6 domain is found at 60-140 (LRCYRCLLET…SQCCFLGFLQ (81 aa)). 4 disulfides stabilise this stretch: Cys62/Cys89, Cys65/Cys74, Cys81/Cys107, and Cys116/Cys133. N-linked (GlcNAc...) asparagine glycosylation is present at Asn96.

In terms of assembly, forms oligomers. N-glycosylated.

The protein resides in the secreted. Functionally, may have a role in hematopoietic cell differentiation. The sequence is that of Lymphocyte antigen 6 complex locus protein G5c (LY6G5C) from Macaca mulatta (Rhesus macaque).